Reading from the N-terminus, the 381-residue chain is Alkanesulfonate monooxygenase (381 aa).

This sequence belongs to the SsuD family. Homotetramer.

The enzyme catalyses an alkanesulfonate + FMNH2 + O2 = an aldehyde + FMN + sulfite + H2O + 2 H(+). Its function is as follows. Catalyzes the desulfonation of aliphatic sulfonates. The protein is Alkanesulfonate monooxygenase of Escherichia fergusonii (strain ATCC 35469 / DSM 13698 / CCUG 18766 / IAM 14443 / JCM 21226 / LMG 7866 / NBRC 102419 / NCTC 12128 / CDC 0568-73).